The chain runs to 417 residues: NADH-quinone oxidoreductase subunit D (417 aa).

It belongs to the complex I 49 kDa subunit family. As to quaternary structure, NDH-1 is composed of 14 different subunits. Subunits NuoB, C, D, E, F, and G constitute the peripheral sector of the complex.

It localises to the cell inner membrane. It catalyses the reaction a quinone + NADH + 5 H(+)(in) = a quinol + NAD(+) + 4 H(+)(out). NDH-1 shuttles electrons from NADH, via FMN and iron-sulfur (Fe-S) centers, to quinones in the respiratory chain. The immediate electron acceptor for the enzyme in this species is believed to be ubiquinone. Couples the redox reaction to proton translocation (for every two electrons transferred, four hydrogen ions are translocated across the cytoplasmic membrane), and thus conserves the redox energy in a proton gradient. The polypeptide is NADH-quinone oxidoreductase subunit D (Nitrosococcus oceani (strain ATCC 19707 / BCRC 17464 / JCM 30415 / NCIMB 11848 / C-107)).